Here is a 279-residue protein sequence, read N- to C-terminus: Acetylglutamate kinase (279 aa).

Substrate contacts are provided by residues 64–65, arginine 86, and asparagine 177; that span reads GG.

The protein belongs to the acetylglutamate kinase family. ArgB subfamily.

It localises to the cytoplasm. The catalysed reaction is N-acetyl-L-glutamate + ATP = N-acetyl-L-glutamyl 5-phosphate + ADP. Its pathway is amino-acid biosynthesis; L-arginine biosynthesis; N(2)-acetyl-L-ornithine from L-glutamate: step 2/4. Functionally, catalyzes the ATP-dependent phosphorylation of N-acetyl-L-glutamate. This chain is Acetylglutamate kinase, found in Campylobacter jejuni subsp. jejuni serotype O:2 (strain ATCC 700819 / NCTC 11168).